The sequence spans 469 residues: Glutamate--tRNA ligase (469 aa).

The short motif at 9–19 is the 'HIGH' region element; that stretch reads PSPTGFLHVGG. Positions 98, 100, 125, and 127 each coordinate Zn(2+). The 'KMSKS' region motif lies at 236–240; the sequence is KLSKR. Lys-239 lines the ATP pocket.

The protein belongs to the class-I aminoacyl-tRNA synthetase family. Glutamate--tRNA ligase type 1 subfamily. In terms of assembly, monomer. It depends on Zn(2+) as a cofactor.

The protein resides in the cytoplasm. The enzyme catalyses tRNA(Glu) + L-glutamate + ATP = L-glutamyl-tRNA(Glu) + AMP + diphosphate. Catalyzes the attachment of glutamate to tRNA(Glu) in a two-step reaction: glutamate is first activated by ATP to form Glu-AMP and then transferred to the acceptor end of tRNA(Glu). The protein is Glutamate--tRNA ligase of Shewanella halifaxensis (strain HAW-EB4).